The primary structure comprises 461 residues: MSARDNEKGSARSQPSHAAASEIENVPRPSRQQSWTGTMIKVFIICACAGIVSKYIIPLDSIFKSVHIDPHDYATRANRILSTTPLIDGHNDLPYLIRLETKNKIYDHEKLPFRTGLLSHTDQIKIQEGKLGGQFWSVFVECATDPNAEIDDPTWAVRDTLEQIDVTKRLVQEYPDLLEYCESASCAKAAFKRGKVGSFLGIEGGHQIGNSLASLRQVYDLGVRYITVTHNCDNAFATAASTVAVGKPDLGLTDFGREFVKEMNRLGMLVDLSHVSHQTMRDILSVTKAPVMFSHSSSYALSKHLRNVPDDVLNGVTKNGGVVMVTFVPSFLKVDDPASATIHDAVDHILHVAKVAGWDHVGIGSDFDGTADVPEGLENVSKYPRLIELLLERGVTDEQARKLIGENILRVWSNVEEIAENIRALGEKPNEETWSGRKWTAAIDIPMPFMFKDSADKRKEL.

Positions 1–10 are enriched in basic and acidic residues; sequence MSARDNEKGS. The disordered stretch occupies residues 1-31; the sequence is MSARDNEKGSARSQPSHAAASEIENVPRPSR. The chain crosses the membrane as a helical span at residues 35–52; it reads WTGTMIKVFIICACAGIV. Zn(2+) is bound by residues His90, Asp92, and Glu203. A disulfide bond links Cys142 and Cys232. Residue His230 participates in substrate binding. Residues His274 and His295 each coordinate Zn(2+). Substrate is bound by residues Arg306 and Asp366. N-linked (GlcNAc...) asparagine glycosylation is present at Asn379.

It belongs to the metallo-dependent hydrolases superfamily. Peptidase M19 family. It depends on Zn(2+) as a cofactor.

It localises to the membrane. It carries out the reaction an L-aminoacyl-L-amino acid + H2O = 2 an L-alpha-amino acid. Hydrolyzes a wide range of dipeptides. The sequence is that of Putative dipeptidase CPSG_01350 from Coccidioides posadasii (strain RMSCC 757 / Silveira) (Valley fever fungus).